Reading from the N-terminus, the 149-residue chain is Large ribosomal subunit protein bL9 (149 aa).

It belongs to the bacterial ribosomal protein bL9 family.

Functionally, binds to the 23S rRNA. The chain is Large ribosomal subunit protein bL9 from Leptospira interrogans serogroup Icterohaemorrhagiae serovar copenhageni (strain Fiocruz L1-130).